The chain runs to 339 residues: Homeobox protein Hox-D13 (339 aa).

The interval 1–33 is disordered; the sequence is MSRSGTWDMDGLRADGGAAGAAPASSSSSVAAP. Residues 20-33 are compositionally biased toward low complexity; the sequence is GAAPASSSSSVAAP. The segment at residues 272–331 is a DNA-binding region (homeobox); the sequence is GRKKRVPYTKLQLKELENEYAINKFINKDKRRRISAATNLSERQVTIWFQNRRVKDKKIV.

This sequence belongs to the Abd-B homeobox family.

It is found in the nucleus. Its function is as follows. Sequence-specific transcription factor that binds gene promoters and activates their transcription. Part of a developmental regulatory system that provides cells with specific positional identities on the anterior-posterior axis. In Mus musculus (Mouse), this protein is Homeobox protein Hox-D13 (Hoxd13).